A 420-amino-acid polypeptide reads, in one-letter code: 3-isopropylmalate dehydratase large subunit (420 aa).

[4Fe-4S] cluster-binding residues include Cys-300, Cys-361, and Cys-364.

This sequence belongs to the aconitase/IPM isomerase family. LeuC type 2 subfamily. In terms of assembly, heterodimer of LeuC and LeuD. Requires [4Fe-4S] cluster as cofactor.

It catalyses the reaction (2R,3S)-3-isopropylmalate = (2S)-2-isopropylmalate. It functions in the pathway amino-acid biosynthesis; L-leucine biosynthesis; L-leucine from 3-methyl-2-oxobutanoate: step 2/4. Its function is as follows. Catalyzes the isomerization between 2-isopropylmalate and 3-isopropylmalate, via the formation of 2-isopropylmaleate. This is 3-isopropylmalate dehydratase large subunit from Endomicrobium trichonymphae.